A 358-amino-acid chain; its full sequence is MFREVIRTISPYIPGKPISEVKRELGLEKVIKLASNENPLGPSENVKKAIKESLDDLSLYPDGNCTELKLKLAKKLNVKPTQIIFGAGSDEITQLIASIFINPGDNSIMARPSFPRYETVTKVMGGIPIEIPLKNYTHDLEEFSKHINERTRVIWICNPNNPTGTIVKKDELYNFIKSVPSEIAVVVDQAYKEYIDDPEYPDAIHWLDEFKNLIVLQTFSKIYGLASLRIGYAIASEEIIEKLNRVRPPFNVNHVAQIAAIAALDDQEHIEKAKELNKKSLEFFYKSFEEMKLPYIKSYGNFVMVDVTKDAVEVFKKLLLKGIIVRPGDIFDMPTYIRVTTGLESDNMEFIKALKEVL.

The residue at position 221 (Lys221) is an N6-(pyridoxal phosphate)lysine.

This sequence belongs to the class-II pyridoxal-phosphate-dependent aminotransferase family. Histidinol-phosphate aminotransferase subfamily. As to quaternary structure, homodimer. Pyridoxal 5'-phosphate serves as cofactor.

It carries out the reaction L-histidinol phosphate + 2-oxoglutarate = 3-(imidazol-4-yl)-2-oxopropyl phosphate + L-glutamate. It participates in amino-acid biosynthesis; L-histidine biosynthesis; L-histidine from 5-phospho-alpha-D-ribose 1-diphosphate: step 7/9. The sequence is that of Histidinol-phosphate aminotransferase from Caldicellulosiruptor saccharolyticus (strain ATCC 43494 / DSM 8903 / Tp8T 6331).